Consider the following 519-residue polypeptide: T-box transcription factor TBX5 (519 aa).

The disordered stretch occupies residues 1–43 (MADTEEAYGMPDTPVEAEPKELQCEPKQDNQMGASSKTPTSPQ). The segment covering 17–28 (AEPKELQCEPKQ) has biased composition (basic and acidic residues). Positions 29–43 (DNQMGASSKTPTSPQ) are enriched in polar residues. Positions 63–238 (LWLKFHEVGT…NNPFAKGFRG (176 aa)) form a DNA-binding region, T-box. Disordered stretches follow at residues 254–312 (EYPV…SAYP) and 335–376 (ELSY…TESA). Polar residues predominate over residues 262-303 (TVRQKVSSNHSPFSQETRNITGSSTLNSQYQCENGVSSTSQD).

In terms of assembly, monomer. Homodimer (via the T-box); binds DNA as homodimer.

Its subcellular location is the nucleus. It is found in the cytoplasm. DNA-binding protein that regulates the transcription of several genes and is involved in heart development and limb pattern formation. May bind to the core DNA motif of promoters. The protein is T-box transcription factor TBX5 (tbx5) of Xenopus tropicalis (Western clawed frog).